The following is a 239-amino-acid chain: DNA damage-regulated autophagy modulator protein 1 (239 aa).

Transmembrane regions (helical) follow at residues 15-35 (ILVI…VLIG), 54-74 (SGVF…TMYT), 91-111 (IYFN…MGIV), 119-139 (VPAV…MYIL), 162-182 (MTVS…SILS), and 201-221 (TSAI…LTFI).

This sequence belongs to the DRAM/TMEM150 family.

The protein localises to the lysosome membrane. Functionally, lysosomal modulator of autophagy that plays a central role in p53/TP53-mediated apoptosis. This Xenopus laevis (African clawed frog) protein is DNA damage-regulated autophagy modulator protein 1 (dram1).